A 150-amino-acid polypeptide reads, in one-letter code: Protein ADM2 (150 aa).

The first 25 residues, M1 to S25, serve as a signal peptide directing secretion. Residues G26 to S100 constitute a propeptide that is removed on maturation. Residues L28 to R102 form a disordered region. C112 and C117 are oxidised to a cystine. Residue Y149 is modified to Tyrosine amide.

This sequence belongs to the adrenomedullin family. High expression detected in the submaxillary gland, kidney, stomach, and mesentery, followed by the pituitary, lung, pancreas, intestines, spleen, thymus and ovary. Expressed mainly in the intermediate lobe of the pituitary, with sporadic in the anterior lobe.

It localises to the secreted. Functionally, intermedin/ADM2 is a peptide hormone that plays a role as physiological regulator of gastrointestinal and cardiovascular bioactivities mediated by the CALCRL-RAMPs receptor complexes. Activates the cAMP-dependent pathway through interaction with CALCRL-RAMP3 receptor complex. The protein is Protein ADM2 of Mus musculus (Mouse).